The sequence spans 447 residues: N-succinylarginine dihydrolase (447 aa).

Residues 19-28 (AGLSFGNEAS), Asn110, and 137-138 (HR) each bind substrate. Glu174 is a catalytic residue. Arg214 lines the substrate pocket. Residue His250 is part of the active site. Positions 252 and 365 each coordinate substrate. The active-site Nucleophile is the Cys371.

Belongs to the succinylarginine dihydrolase family. In terms of assembly, homodimer.

The catalysed reaction is N(2)-succinyl-L-arginine + 2 H2O + 2 H(+) = N(2)-succinyl-L-ornithine + 2 NH4(+) + CO2. It functions in the pathway amino-acid degradation; L-arginine degradation via AST pathway; L-glutamate and succinate from L-arginine: step 2/5. Functionally, catalyzes the hydrolysis of N(2)-succinylarginine into N(2)-succinylornithine, ammonia and CO(2). The polypeptide is N-succinylarginine dihydrolase (Acinetobacter baumannii (strain ACICU)).